A 183-amino-acid polypeptide reads, in one-letter code: U3 small nucleolar ribonucleoprotein protein IMP3 (183 aa).

Residues 109 to 175 form the S4 RNA-binding domain; it reads RRLPVIMHRL…IKKTLLRYRN (67 aa).

Belongs to the universal ribosomal protein uS4 family. In terms of assembly, component of a heterotrimeric complex containing IMP3, IMP4 and MPP10. Interacts with MPP10. Component of the ribosomal small subunit (SSU) processome composed of at least 40 protein subunits and snoRNA U3.

It is found in the nucleus. The protein resides in the nucleolus. Its function is as follows. Required for the early cleavages at sites A0, A1 and A2 during 18S ribosomal pre-RNA processing. This is U3 small nucleolar ribonucleoprotein protein IMP3 (IMP3) from Saccharomyces cerevisiae (strain ATCC 204508 / S288c) (Baker's yeast).